The chain runs to 419 residues: Gamma-glutamyl phosphate reductase (419 aa).

It belongs to the gamma-glutamyl phosphate reductase family.

The protein localises to the cytoplasm. The enzyme catalyses L-glutamate 5-semialdehyde + phosphate + NADP(+) = L-glutamyl 5-phosphate + NADPH + H(+). It functions in the pathway amino-acid biosynthesis; L-proline biosynthesis; L-glutamate 5-semialdehyde from L-glutamate: step 2/2. Its function is as follows. Catalyzes the NADPH-dependent reduction of L-glutamate 5-phosphate into L-glutamate 5-semialdehyde and phosphate. The product spontaneously undergoes cyclization to form 1-pyrroline-5-carboxylate. This chain is Gamma-glutamyl phosphate reductase, found in Caldicellulosiruptor bescii (strain ATCC BAA-1888 / DSM 6725 / KCTC 15123 / Z-1320) (Anaerocellum thermophilum).